The primary structure comprises 214 residues: MAETSGPQSSHISSSSAGDKGSGCAVRDLLYWRDVKQSGMVFGGTMVLLLSLAAFSIISVISYLVLSLLSVTISFRVYKSVLQAVQKTEEGHPFKPLLEKDIALSSDSFQKGLSSSLAHVNHALKSIVRLFLVEDLVDSLKLALLMWLMTYIGAVFNGITLLILGVLLAFTTPLVYEKYKVQIDHYVSLVHSQVKSITEKIQAKLPGALKKKSE.

The interval 1–22 (MAETSGPQSSHISSSSAGDKGS) is disordered. One can recognise a Reticulon domain in the interval 26–214 (VRDLLYWRDV…LPGALKKKSE (189 aa)). 2 helical membrane-spanning segments follow: residues 46-66 (MVLLLSLAAFSIISVISYLVL) and 150-170 (TYIGAVFNGITLLILGVLLAF).

As to quaternary structure, homodimer.

The protein localises to the endoplasmic reticulum membrane. Its subcellular location is the golgi apparatus membrane. May be involved in membrane trafficking in the early secretory pathway. This chain is Reticulon-3-B (rtn3-b), found in Xenopus laevis (African clawed frog).